The sequence spans 88 residues: MKTSPRLSVIDGVGEEVRPDLFQLVHVVPPNTCEPPEQWLRVTVLLVPGLGGLIARDNYPLAGKLHKSALDWHFMWITVAEAEHLAIR.

This is an uncharacterized protein from Gracula (BFDV).